The primary structure comprises 476 residues: ATP synthase subunit beta (476 aa).

154 to 161 (GGAGVGKT) is a binding site for ATP.

The protein belongs to the ATPase alpha/beta chains family. F-type ATPases have 2 components, CF(1) - the catalytic core - and CF(0) - the membrane proton channel. CF(1) has five subunits: alpha(3), beta(3), gamma(1), delta(1), epsilon(1). CF(0) has three main subunits: a(1), b(2) and c(9-12). The alpha and beta chains form an alternating ring which encloses part of the gamma chain. CF(1) is attached to CF(0) by a central stalk formed by the gamma and epsilon chains, while a peripheral stalk is formed by the delta and b chains.

The protein resides in the cell inner membrane. The enzyme catalyses ATP + H2O + 4 H(+)(in) = ADP + phosphate + 5 H(+)(out). Functionally, produces ATP from ADP in the presence of a proton gradient across the membrane. The catalytic sites are hosted primarily by the beta subunits. This chain is ATP synthase subunit beta, found in Nitrobacter hamburgensis (strain DSM 10229 / NCIMB 13809 / X14).